Here is a 352-residue protein sequence, read N- to C-terminus: Protein-glutamate methylesterase/protein-glutamine glutaminase 2 (352 aa).

The Response regulatory domain occupies 1-116 (MVVDDSAVVR…KQFLTDSADE (116 aa)). At Asp-50 the chain carries 4-aspartylphosphate. Residues 162–352 (AQTTERIVAI…MAREIVTQLQ (191 aa)) form the CheB-type methylesterase domain. Catalysis depends on residues Ser-174, His-200, and Asp-296.

Belongs to the CheB family. Phosphorylated by CheA. Phosphorylation of the N-terminal regulatory domain activates the methylesterase activity.

The protein resides in the cytoplasm. It carries out the reaction [protein]-L-glutamate 5-O-methyl ester + H2O = L-glutamyl-[protein] + methanol + H(+). The enzyme catalyses L-glutaminyl-[protein] + H2O = L-glutamyl-[protein] + NH4(+). Functionally, involved in chemotaxis. Part of a chemotaxis signal transduction system that modulates chemotaxis in response to various stimuli. Catalyzes the demethylation of specific methylglutamate residues introduced into the chemoreceptors (methyl-accepting chemotaxis proteins or MCP) by CheR. Also mediates the irreversible deamidation of specific glutamine residues to glutamic acid. The protein is Protein-glutamate methylesterase/protein-glutamine glutaminase 2 of Xanthomonas euvesicatoria pv. vesicatoria (strain 85-10) (Xanthomonas campestris pv. vesicatoria).